A 287-amino-acid polypeptide reads, in one-letter code: Small ribosomal subunit biogenesis GTPase RsgA (287 aa).

Residues 63-223 (KNLLIRPKVA…VIDTPGFGSL (161 aa)) enclose the CP-type G domain. GTP contacts are provided by residues 113 to 116 (SKMD) and 166 to 174 (GQSGVGKST). Zn(2+) contacts are provided by Cys-246, Cys-251, His-253, and Cys-259.

The protein belongs to the TRAFAC class YlqF/YawG GTPase family. RsgA subfamily. As to quaternary structure, monomer. Associates with 30S ribosomal subunit, binds 16S rRNA. Requires Zn(2+) as cofactor.

The protein localises to the cytoplasm. Functionally, one of several proteins that assist in the late maturation steps of the functional core of the 30S ribosomal subunit. Helps release RbfA from mature subunits. May play a role in the assembly of ribosomal proteins into the subunit. Circularly permuted GTPase that catalyzes slow GTP hydrolysis, GTPase activity is stimulated by the 30S ribosomal subunit. The polypeptide is Small ribosomal subunit biogenesis GTPase RsgA (Malacoplasma penetrans (strain HF-2) (Mycoplasma penetrans)).